The sequence spans 461 residues: uncharacterized protein (461 aa).

LRR repeat units follow at residues 119 to 140 (NVKKLNLWGCGIDDIQVCEKMS), 141 to 162 (LLEVLSLSVNEVKSLAPLQHCK), and 163 to 184 (NLKEVYLRKNCLESLDELEYLK). Residues 197-237 (NPCVGEGGQEYRRKVIRVLPNLTKLDDKPVTTTDHQEAIED) form the LRRCT domain.

This is an uncharacterized protein from Caenorhabditis elegans.